Here is a 323-residue protein sequence, read N- to C-terminus: Acetyl esterase (323 aa).

The Involved in the stabilization of the negatively charged intermediate by the formation of the oxyanion hole signature appears at 91 to 93 (HGG). Residues serine 165, aspartate 262, and histidine 292 contribute to the active site.

Belongs to the 'GDXG' lipolytic enzyme family. Homodimer. Interacts with MalT and MelA.

The protein localises to the cytoplasm. Displays esterase activity towards short chain fatty esters (acyl chain length of up to 8 carbons). Able to hydrolyze triacetylglycerol (triacetin) and tributyrylglycerol (tributyrin), but not trioleylglycerol (triolein) or cholesterol oleate. Negatively regulates MalT activity by antagonizing maltotriose binding. Inhibits MelA galactosidase activity. In Salmonella agona (strain SL483), this protein is Acetyl esterase.